The chain runs to 751 residues: MSGSGRKDFDVKHILRLRWKLFSHPSPASSSPAGGSCLQQDSGGGSFEHWGPSQSRLLKNQEKGSVSAFWKKPSSSSSSSSSSSSSASSSPFNPLNGTLLPVATRLQQGAPGQGTQQPARTLFYVESLEEEVVTGMDFSGPEDKGLALKELQAEPASSIQATGEGCGHRLTSTNHSLTPQSDLDSSSSEEFYQAVHHAEQSFRKMENYLKQQQLCDVILIVGNRKIPAHRLVLSSVSDYFAAMFTSDVCEAKQEEIKMEGIDPNALWDLVQFAYTGCLELKEDTIENLLAAACLLQLPQVVEVCCHFLMKLLHPSNCLGIRAFADAQGCIELMKVAHSYTMENIMEVIRNQEFLLLPAEELHKLLASDDVNVPDEETIFHALMMWVKYDMQRRCSDLSMLLAFIRLPLLPPQILADLENHALFKNDLECQKLILEAMKYHLLPERRTLMQSPRTKPRKSTVGTLYAVGGMDNNKGATTIEKYDLRTNLWIQAGMMNGRRLQFGVAVIDDKLFVIGGRDGLKTLNTVECYNPKTKTWTVLPPMSTHRHGLGVTVLEGPIYAVGGHDGWSYLNTVERWDPQSQQWTYVASMSIARSTVGVAALNGKLYSVGGRDGSSCLSSMEYYDPHTNKWSMCAPMCKRRGGVGVATCDGFLYAVGGHDAPASNHCSRLLDYVERYDPKTDTWTMVAPLSMPRDAVGVCLLGDRLYAVGGYDGQTYLNTMESYDPQTNEWTQMASLNIGRAGACVVVIKQP.

2 stretches are compositionally biased toward low complexity: residues Pro-25–Ser-36 and Ser-74–Ser-90. Disordered regions lie at residues Pro-25 to Gln-54, Phe-69 to Thr-98, and Ser-157 to Asp-184. Residues Leu-170–Asp-184 are compositionally biased toward polar residues. In terms of domain architecture, BTB spans Cys-215–Glu-282. 6 Kelch repeats span residues Thr-463–Asp-509, Lys-510–Gly-556, Ile-558–Gly-603, Lys-604–Gly-650, Leu-652–Asp-703, and Arg-704–Gln-750.

In terms of tissue distribution, highly expressed in brain.

Its subcellular location is the cytoplasm. The protein localises to the cytoskeleton. In terms of biological role, may play a role in organizing the actin cytoskeleton of the brain cells. In Mus musculus (Mouse), this protein is Kelch-like protein 1 (Klhl1).